The sequence spans 252 residues: Demethylmenaquinone methyltransferase (252 aa).

S-adenosyl-L-methionine is bound by residues Thr64, Asp85, and 112 to 113 (NA).

The protein belongs to the class I-like SAM-binding methyltransferase superfamily. MenG/UbiE family.

The catalysed reaction is a 2-demethylmenaquinol + S-adenosyl-L-methionine = a menaquinol + S-adenosyl-L-homocysteine + H(+). It participates in quinol/quinone metabolism; menaquinone biosynthesis; menaquinol from 1,4-dihydroxy-2-naphthoate: step 2/2. In terms of biological role, methyltransferase required for the conversion of demethylmenaquinol (DMKH2) to menaquinol (MKH2). The protein is Demethylmenaquinone methyltransferase of Lactococcus lactis subsp. lactis (strain IL1403) (Streptococcus lactis).